A 393-amino-acid polypeptide reads, in one-letter code: Elongation factor Tu (393 aa).

In terms of domain architecture, tr-type G spans 10 to 203; sequence KPHVNIGTIG…AVDNYIPEPV (194 aa). The interval 19 to 26 is G1; that stretch reads GHVDHGKT. Residue 19–26 participates in GTP binding; sequence GHVDHGKT. Threonine 26 contributes to the Mg(2+) binding site. The G2 stretch occupies residues 60–64; sequence GITIS. Residues 81-84 are G3; that stretch reads DCPG. Residues 81 to 85 and 136 to 139 each bind GTP; these read DCPGH and NKVD. The segment at 136–139 is G4; the sequence is NKVD. The interval 173-175 is G5; that stretch reads SAL.

This sequence belongs to the TRAFAC class translation factor GTPase superfamily. Classic translation factor GTPase family. EF-Tu/EF-1A subfamily. In terms of assembly, monomer.

It localises to the cytoplasm. The catalysed reaction is GTP + H2O = GDP + phosphate + H(+). Its function is as follows. GTP hydrolase that promotes the GTP-dependent binding of aminoacyl-tRNA to the A-site of ribosomes during protein biosynthesis. This is Elongation factor Tu from Chlorobium phaeovibrioides (strain DSM 265 / 1930) (Prosthecochloris vibrioformis (strain DSM 265)).